The following is a 1010-amino-acid chain: DENN domain-containing protein 1A (1010 aa).

Residues 13-143 (FEVYIEVNRP…HGHPIPEPGT (131 aa)) enclose the uDENN domain. The region spanning 160–296 (ELPSIPENRN…VVSALKNRIR (137 aa)) is the cDENN domain. Residues 298–375 (MSTTTGDGVA…DGRLDLLNSG (78 aa)) form the dDENN domain. Positions 378–382 (FSDVF) match the FXDXF motif motif. The interval 455–554 (GFSTATEEPL…EATVKEPQST (100 aa)) is disordered. Positions 472-482 (IEKKRGEERRP) are enriched in basic and acidic residues. The span at 493-502 (PRPHVPRRPK) shows a compositional bias: basic residues. A compositionally biased stretch (polar residues) spans 509 to 524 (SRTTAGSSPDQPQQYR). Residues 538-548 (SPEKDSSEATV) are compositionally biased toward basic and acidic residues. The short motif at 560–569 (SLLEDIFSNL) is the Clathrin box element.

It is found in the cytoplasmic vesicle. It localises to the clathrin-coated vesicle membrane. The protein localises to the presynaptic cell membrane. Guanine nucleotide exchange factor (GEF) regulating clathrin-mediated endocytosis through RAB35 activation. Promotes the exchange of GDP to GTP, converting inactive GDP-bound RAB35 into its active GTP-bound form. Regulates clathrin-mediated endocytosis of synaptic vesicles and mediates exit from early endosomes. Binds phosphatidylinositol-phosphates (PtdInsPs), with some preference for PtdIns(3)P. The chain is DENN domain-containing protein 1A (dennd1a) from Xenopus laevis (African clawed frog).